The primary structure comprises 399 residues: Developmentally-regulated G-protein 1 (399 aa).

In terms of domain architecture, OBG-type G spans 63–288 (GRVALIGFPS…LLARMWDEMG (226 aa)). Residues 69-76 (GFPSVGKS), 115-119 (DLPGI), and 246-249 (NKID) contribute to the GTP site. The region spanning 288–366 (GLVRVYSKPQ…EDEDVVQIVK (79 aa)) is the TGS domain. The segment at 367–399 (KKERDEGGRGRFKSHSNAPARIADREKKAPLKQ) is disordered. A compositionally biased stretch (basic and acidic residues) spans 388–399 (IADREKKAPLKQ).

It belongs to the TRAFAC class OBG-HflX-like GTPase superfamily. OBG GTPase family. In terms of tissue distribution, expressed in actively growing tissues and reproductive organs. Mostly expressed in leaves, stems and siliques. Also present in flowers and flower buds, and, to a lower extent, in roots.

Its subcellular location is the cytoplasmic vesicle. The protein resides in the cytoplasm. Binds GDP and GTP, and has low GTPase activity. May interact with phosphatidic acid (PA). The sequence is that of Developmentally-regulated G-protein 1 (DRG1) from Arabidopsis thaliana (Mouse-ear cress).